Here is an 861-residue protein sequence, read N- to C-terminus: MGTSCNKINSNSNKGKENMHFVLDDNGDSKGNASNQQVERDDKLDMETTRWNGKEFEEPLSTNKKLIIQSNNTSSQHSTPPLSISDTSTHTGSSTDNVEANPNTGFSSARKRSLRSSNLKKKFVPLSSPEESNESEFIDDDESDEVASIIDIKEDETFDSKVEIPEAAPSSSTESDEESIPLSYQSKRRRVSARASSSASSSSRTQAKSIPSHERTHYRLIRQHPELEHVWEKLEEEAPREVKQIEQPKELVLNLLPFQREGVYWLKRQEDSSFGGGILADEMGMGKTIQTIALLLSEPRGKPTLVVAPVVAIMQWKEEIDTHTNKALSTYLYYGQARDISGEELSSYDVVLTSYNVIESVYRKERSGFRRKNGVVKEKSLLHQMEFYRIILDEAHGIKSRTCNTARAVCGLRTTRKICLSGTPLQNRIGELFSLLRFLRADPFAYYYCLQCECKSLHWRFSDRSNCDECGHKPMSHTCYFNAEMLKPIQKFGYEGPGKLAFKKVHSLLKHIMLRRTKLERADDLGLPPRVVEVRKDLFNEEEEDVYQSLYMDSKRKFNTYLAEGVVLNNYANIFQLITRMRQMADHPDLVLASKRKTVDIENQENIVCKICDEVAQDAIESRCHHTFCRLCVTEYINAAGDGENVNCPSCFIPLSIDLSAPALEDFSEEKFKNASILNRIDMNSWRSSTKIEALVEELYLLRKKDRTLKSIVFSQFTSMLDLIHWRLRKAGFNCVKLDGGMTPKARAATIEAFSNDINITIFLVSLKAGGVALNLTEASQVFMMDPWWNGAVQWQAMDRIHRIGQKRPIKVITLCIENSIESKIIELQEKKAQMIHATIDQDEKALNQLSVEDMQFLFSN.

Residues 1–13 (MGTSCNKINSNSN) show a composition bias toward polar residues. The interval 1-217 (MGTSCNKINS…KSIPSHERTH (217 aa)) is disordered. 2 stretches are compositionally biased toward basic and acidic residues: residues 14-23 (KGKENMHFVL) and 38-57 (VERD…KEFE). The span at 60 to 82 (LSTNKKLIIQSNNTSSQHSTPPL) shows a compositional bias: polar residues. Over residues 83-95 (SISDTSTHTGSST) the composition is skewed to low complexity. Positions 96 to 106 (DNVEANPNTGF) are enriched in polar residues. The span at 109-123 (ARKRSLRSSNLKKKF) shows a compositional bias: basic residues. Over residues 131–145 (ESNESEFIDDDESDE) the composition is skewed to acidic residues. Low complexity predominate over residues 193-204 (ARASSSASSSSR). The 175-residue stretch at 268-442 (RQEDSSFGGG…FSLLRFLRAD (175 aa)) folds into the Helicase ATP-binding domain. An ATP-binding site is contributed by 281 to 288 (DEMGMGKT). A DEAH box motif is present at residues 393 to 396 (DEAH). The segment at 609 to 652 (CKICDEVAQDAIESRCHHTFCRLCVTEYINAAGDGENVNCPSCF) adopts an RING-type zinc-finger fold. The Helicase C-terminal domain occupies 695 to 848 (LVEELYLLRK…TIDQDEKALN (154 aa)).

Belongs to the SNF2/RAD54 helicase family.

It localises to the nucleus. In terms of biological role, involved in global genome repair (GGR) via nucleotide excision repair (NER), in conjunction with rhp7, after UV irradiation. The chain is ATP-dependent helicase rhp16 (rhp16) from Schizosaccharomyces pombe (strain 972 / ATCC 24843) (Fission yeast).